A 117-amino-acid chain; its full sequence is Large ribosomal subunit protein bL20 (117 aa).

It belongs to the bacterial ribosomal protein bL20 family.

In terms of biological role, binds directly to 23S ribosomal RNA and is necessary for the in vitro assembly process of the 50S ribosomal subunit. It is not involved in the protein synthesizing functions of that subunit. This Aliivibrio salmonicida (strain LFI1238) (Vibrio salmonicida (strain LFI1238)) protein is Large ribosomal subunit protein bL20.